The primary structure comprises 439 residues: MKKDIVKPSILPGFMELLPADQIVFNKMKDTIRHNYEKFGFIPLDTPTIEKSEILLAKGGGETEKQIYRFNKGNTDLSLRFDLTVPLARYVSQHFSDLNFPFRRYHISKVFRGERNQKGRFREFYQCDIDIIGNGSLSIINDAEIPSIIYQTFKELGFEDFTIRINNRKVLNGFFEGTDVEDRKGVLRAIDKIEKIGEDGVRKELQELGLEDSKIDKIINFINIKGTKSEVIKSLKELDIENDVFKEGVYELEKVVHYIKSFNVPDKNYKIDLTIARGLDYYTGTVYETVLNNYPQIGSVCSGGRYDNLAEHYTNQKLPGVGISIGLTRLFYQLREAKIIGENASSTLSQALVIPVGDTMEYSIKVANKLRENEIISELYLEDAKIGKKFAYADKLKIPYVILIGEDELKEEKVSVKNMETGNQESMSLEEAIKIIKNA.

The protein belongs to the class-II aminoacyl-tRNA synthetase family. As to quaternary structure, homodimer.

It localises to the cytoplasm. The enzyme catalyses tRNA(His) + L-histidine + ATP = L-histidyl-tRNA(His) + AMP + diphosphate + H(+). This Clostridium tetani (strain Massachusetts / E88) protein is Histidine--tRNA ligase.